The chain runs to 335 residues: MTGTTLAATYGPISGADLEAELAQPRIADGDAQDAAVYERDGGARALPFASGGAPPDGDRADVRRAAGAGDASVRLTRVSKRYGERAVLADVDLSIGRGSFVSIVGRSGCGKSTLLRLVAELETPSAGTLVKRGDGGGALDTRIMYQEARLLPWKTVLQNVMLGLGRRAKDDARAVLDEVGLLARANDWPAQLSGGQRQRVALARALVHRPQLLLLDEPLGALDALTRIEMHALIERLWREHRFTALLVTHDVQEAVALADRVLLIEAGRIAFDQRVPLDRPRARASAAFAALEDRVLQRVLTGSDAAPAAPNAAGPEGASRGRAAPASGLRWAV.

The 220-residue stretch at 74–293 (VRLTRVSKRY…ARASAAFAAL (220 aa)) folds into the ABC transporter domain. Residue 106–113 (GRSGCGKS) participates in ATP binding. Residues 308-335 (APAAPNAAGPEGASRGRAAPASGLRWAV) are disordered.

Belongs to the ABC transporter superfamily. Aliphatic sulfonates importer (TC 3.A.1.17.2) family. As to quaternary structure, the complex is composed of two ATP-binding proteins (SsuB), two transmembrane proteins (SsuC) and a solute-binding protein (SsuA).

It localises to the cell inner membrane. It carries out the reaction ATP + H2O + aliphatic sulfonate-[sulfonate-binding protein]Side 1 = ADP + phosphate + aliphatic sulfonateSide 2 + [sulfonate-binding protein]Side 1.. Part of the ABC transporter complex SsuABC involved in aliphatic sulfonates import. Responsible for energy coupling to the transport system. The sequence is that of Aliphatic sulfonates import ATP-binding protein SsuB from Burkholderia mallei (strain ATCC 23344).